A 139-amino-acid polypeptide reads, in one-letter code: Maximins 4/H3 type 5 (139 aa).

Positions 1–18 (MNFKYIFAVSFLIASAYA) are cleaved as a signal peptide. A propeptide spanning residues 19 to 43 (RSVQNDEQSLSQRDVLEEESLREIR) is cleaved from the precursor. Asparagine amide is present on Asn-70. The propeptide occupies 74 to 118 (TAEEHEVMKRLEAVMRDLDSLDHPEEASERETRGFNQDEIAKEKR). Ile-138 carries the isoleucine amide modification.

The protein belongs to the bombinin family. In terms of tissue distribution, expressed by the skin glands.

It localises to the secreted. Its function is as follows. Maximin-4 shows antibacterial activity against both Gram-positive and Gram-negative bacteria. It also shows antimicrobial activity against the fungus C.albicans, but not against A.flavus nor P.uticale. It has little hemolytic activity. It does not possess a significant cytotoxicity against tumor cell lines. It does not possess a significant anti-HIV activity. Functionally, maximin-H3 shows antibacterial activity against both Gram-positive and Gram-negative bacteria. It also shows antimicrobial activity against the fungus C.albicans. Shows strong hemolytic activity. This Bombina maxima (Giant fire-bellied toad) protein is Maximins 4/H3 type 5.